Reading from the N-terminus, the 301-residue chain is Diaminopimelate epimerase (301 aa).

Residues Asn15, Gln47, and Asn67 each contribute to the substrate site. Cys76 functions as the Proton donor in the catalytic mechanism. Residues 77 to 78 (GN), Asn163, Asn197, and 215 to 216 (ER) contribute to the substrate site. The active-site Proton acceptor is the Cys224. 225-226 (GS) is a substrate binding site.

Belongs to the diaminopimelate epimerase family. As to quaternary structure, homodimer.

It localises to the cytoplasm. It carries out the reaction (2S,6S)-2,6-diaminopimelate = meso-2,6-diaminopimelate. It participates in amino-acid biosynthesis; L-lysine biosynthesis via DAP pathway; DL-2,6-diaminopimelate from LL-2,6-diaminopimelate: step 1/1. Functionally, catalyzes the stereoinversion of LL-2,6-diaminopimelate (L,L-DAP) to meso-diaminopimelate (meso-DAP), a precursor of L-lysine and an essential component of the bacterial peptidoglycan. The polypeptide is Diaminopimelate epimerase (Rhizobium meliloti (strain 1021) (Ensifer meliloti)).